Here is a 328-residue protein sequence, read N- to C-terminus: DNA-directed RNA polymerase subunit alpha (328 aa).

The tract at residues methionine 1–glutamate 234 is alpha N-terminal domain (alpha-NTD). Residues isoleucine 268–lysine 328 form an alpha C-terminal domain (alpha-CTD) region.

This sequence belongs to the RNA polymerase alpha chain family. In terms of assembly, in plastids the minimal PEP RNA polymerase catalytic core is composed of four subunits: alpha, beta, beta', and beta''. When a (nuclear-encoded) sigma factor is associated with the core the holoenzyme is formed, which can initiate transcription.

Its subcellular location is the plastid. It is found in the chloroplast. The enzyme catalyses RNA(n) + a ribonucleoside 5'-triphosphate = RNA(n+1) + diphosphate. DNA-dependent RNA polymerase catalyzes the transcription of DNA into RNA using the four ribonucleoside triphosphates as substrates. The sequence is that of DNA-directed RNA polymerase subunit alpha from Citrus sinensis (Sweet orange).